The sequence spans 318 residues: 2-keto-3-deoxygluconate permease (318 aa).

A run of 10 helical transmembrane segments spans residues 10 to 30, 42 to 62, 82 to 102, 109 to 129, 139 to 159, 163 to 183, 201 to 221, 224 to 244, 257 to 277, and 288 to 308; these read LPGG…TLWP, GLIS…GATI, IAVA…GGIP, LSVL…YAAL, AGAV…LILG, LATF…LGFA, TLVP…TIVH, ASGV…LLLA, VAAS…AGMA, and TALV…LTAL.

It belongs to the KdgT transporter family.

Its subcellular location is the cell inner membrane. It carries out the reaction 2-dehydro-3-deoxy-D-gluconate(in) + H(+)(in) = 2-dehydro-3-deoxy-D-gluconate(out) + H(+)(out). Functionally, catalyzes the proton-dependent uptake of 2-keto-3-deoxygluconate (KDG) into the cell. The polypeptide is 2-keto-3-deoxygluconate permease (Xanthomonas oryzae pv. oryzae (strain MAFF 311018)).